Reading from the N-terminus, the 128-residue chain is Small ribosomal subunit protein uS8c (128 aa).

Belongs to the universal ribosomal protein uS8 family. In terms of assembly, part of the 30S ribosomal subunit.

Its subcellular location is the plastid. It localises to the chloroplast. In terms of biological role, one of the primary rRNA binding proteins, it binds directly to 16S rRNA central domain where it helps coordinate assembly of the platform of the 30S subunit. The sequence is that of Small ribosomal subunit protein uS8c (rps8) from Welwitschia mirabilis (Tree tumbo).